The primary structure comprises 329 residues: Adenylate isopentenyltransferase 7, mitochondrial (329 aa).

A mitochondrion-targeting transit peptide spans 1-40 (MKFSISSLKQVQPILCFKNKLSKVNVNSFLHPKEKVIFVM). 41 to 48 (GATGSGKS) serves as a coordination point for ATP.

Belongs to the IPP transferase family. As to expression, expressed in both the vascular stele and the phloem companion cells of the root, in endodermis of the root elongation zone, trichomes on young leaves, and some pollen tubes.

It is found in the mitochondrion. It carries out the reaction dimethylallyl diphosphate + ADP = N(6)-(dimethylallyl)adenosine 5'-diphosphate + diphosphate. The enzyme catalyses dimethylallyl diphosphate + ATP = N(6)-(dimethylallyl)adenosine 5'-triphosphate + diphosphate. In terms of biological role, involved in cytokinin biosynthesis. Catalyzes the transfer of an isopentenyl group from dimethylallyl diphosphate (DMAPP) to ATP and ADP. This Arabidopsis thaliana (Mouse-ear cress) protein is Adenylate isopentenyltransferase 7, mitochondrial (IPT7).